A 191-amino-acid polypeptide reads, in one-letter code: Ribosomal RNA small subunit methyltransferase G (191 aa).

Residues Gly62, Phe67, 111–112 (IE), and Arg124 contribute to the S-adenosyl-L-methionine site.

The protein belongs to the methyltransferase superfamily. RNA methyltransferase RsmG family.

The protein localises to the cytoplasm. It catalyses the reaction guanosine(527) in 16S rRNA + S-adenosyl-L-methionine = N(7)-methylguanosine(527) in 16S rRNA + S-adenosyl-L-homocysteine. Functionally, specifically methylates the N7 position of guanine in position 527 of 16S rRNA. In Rickettsia akari (strain Hartford), this protein is Ribosomal RNA small subunit methyltransferase G.